The primary structure comprises 59 residues: ATP synthase protein 8 (59 aa).

The chain crosses the membrane as a helical span at residues 7–23; sequence LSPPFLYFELIGHFQVE.

It belongs to the ATPase protein 8 family. F-type ATPases have 2 components, CF(1) - the catalytic core - and CF(0) - the membrane proton channel.

Its subcellular location is the mitochondrion membrane. Functionally, mitochondrial membrane ATP synthase (F(1)F(0) ATP synthase or Complex V) produces ATP from ADP in the presence of a proton gradient across the membrane which is generated by electron transport complexes of the respiratory chain. F-type ATPases consist of two structural domains, F(1) - containing the extramembraneous catalytic core and F(0) - containing the membrane proton channel, linked together by a central stalk and a peripheral stalk. During catalysis, ATP synthesis in the catalytic domain of F(1) is coupled via a rotary mechanism of the central stalk subunits to proton translocation. Part of the complex F(0) domain. Minor subunit located with subunit a in the membrane. The polypeptide is ATP synthase protein 8 (MT-ATP8) (Oenothera berteroana (Bertero's evening primrose)).